The following is a 192-amino-acid chain: uncharacterized protein (192 aa).

The Nudix hydrolase domain maps to 29–160; the sequence is HRQAAVLIPI…PLDIYRRGDS (132 aa). Positions 67-89 match the Nudix box motif; the sequence is GAVDDTDASAIAAALREAEEEVA. Mg(2+)-binding residues include glutamate 83 and glutamate 87.

Belongs to the Nudix hydrolase family. PCD1 subfamily. Mn(2+) is required as a cofactor. Mg(2+) serves as cofactor.

Probably mediates the hydrolysis of some nucleoside diphosphate derivatives. This is an uncharacterized protein from Escherichia coli (strain K12).